We begin with the raw amino-acid sequence, 105 residues long: Cuticle protein AMP4 (105 aa).

Residues 1–21 (DRDAQTLTDERNDQGDGNFRY) are disordered. In terms of domain architecture, Chitin-binding type R&amp;R spans 16–81 (DGNFRYEFET…PSSDLLPVGP (66 aa)).

As to expression, arthrodial membrane.

This Homarus americanus (American lobster) protein is Cuticle protein AMP4.